A 359-amino-acid polypeptide reads, in one-letter code: UDP-N-acetylglucosamine--N-acetylmuramyl-(pentapeptide) pyrophosphoryl-undecaprenol N-acetylglucosamine transferase (359 aa).

UDP-N-acetyl-alpha-D-glucosamine is bound by residues 15–17 (TGG), N127, R166, S191, I245, 264–269 (ALTVSE), and Q290.

It belongs to the glycosyltransferase 28 family. MurG subfamily.

It localises to the cell inner membrane. It catalyses the reaction di-trans,octa-cis-undecaprenyl diphospho-N-acetyl-alpha-D-muramoyl-L-alanyl-D-glutamyl-meso-2,6-diaminopimeloyl-D-alanyl-D-alanine + UDP-N-acetyl-alpha-D-glucosamine = di-trans,octa-cis-undecaprenyl diphospho-[N-acetyl-alpha-D-glucosaminyl-(1-&gt;4)]-N-acetyl-alpha-D-muramoyl-L-alanyl-D-glutamyl-meso-2,6-diaminopimeloyl-D-alanyl-D-alanine + UDP + H(+). It participates in cell wall biogenesis; peptidoglycan biosynthesis. Cell wall formation. Catalyzes the transfer of a GlcNAc subunit on undecaprenyl-pyrophosphoryl-MurNAc-pentapeptide (lipid intermediate I) to form undecaprenyl-pyrophosphoryl-MurNAc-(pentapeptide)GlcNAc (lipid intermediate II). In Pseudomonas putida (strain W619), this protein is UDP-N-acetylglucosamine--N-acetylmuramyl-(pentapeptide) pyrophosphoryl-undecaprenol N-acetylglucosamine transferase.